Consider the following 271-residue polypeptide: Mannosyl-3-phosphoglycerate phosphatase (271 aa).

D13 (nucleophile) is an active-site residue. Mg(2+)-binding residues include D13, D15, and D214.

It belongs to the HAD-like hydrolase superfamily. MPGP family. It depends on Mg(2+) as a cofactor.

It localises to the cytoplasm. The catalysed reaction is 2-O-(alpha-D-mannosyl)-3-phosphoglycerate + H2O = (2R)-2-O-(alpha-D-mannosyl)-glycerate + phosphate. The polypeptide is Mannosyl-3-phosphoglycerate phosphatase (Escherichia coli (strain K12 / DH10B)).